Reading from the N-terminus, the 131-residue chain is uncharacterized protein (131 aa).

This is an uncharacterized protein from Acanthamoeba polyphaga (Amoeba).